A 517-amino-acid polypeptide reads, in one-letter code: MLSYLIFALAVSPILGKIEIVFPQHTTGDWKRVPHEYNYCPTSADKNSHGTQTGIPVELTMPKGLTTHQVEGFMCHSALWMTTCDFRWYGPKYITHSIHNEEPTDYQCLEAIKSYKDGVSFNPGFPPQSCGYGTVTDAEAHIVTVTPHSVKVDEYTGEWIDPHFIGGRCKGQICETVHNSTKWFTSSDGESVCSQLFTLVGGIFFSDSEEITSMGLPETGIRSNYFPYISTEGICKMPFCRKQGYKLKNDLWFQIMDPDLDKTVRDLPHIKDCDLSSSIITPGEHATDISLISDVERILDYALCQNTWSKIESGEPITPVDLSYLGPKNPGVGPVFTIINGSLHYFTSKYLRVELESPVIPRMEGKVAGTRIVRQLWDQWFPFGEVEIGPNGVLKTKQGYKFPLHIIGTGEVDSDIKMERVVKHWEHPHIEAAQTFLKKDDTGEVLYYGDTGVSKNPVELVEGWFSGWRSSLMGVLAVIIGFVILMFLIKLIGVLSSLFRPKRRPIYKSDVEMAHFR.

The first 16 residues, 1–16 (MLSYLIFALAVSPILG), serve as a signal peptide directing secretion. The Virion surface portion of the chain corresponds to 17–474 (KIEIVFPQHT…FSGWRSSLMG (458 aa)). Disulfide bonds link cysteine 40-cysteine 304, cysteine 75-cysteine 108, cysteine 84-cysteine 130, cysteine 169-cysteine 174, cysteine 193-cysteine 240, and cysteine 235-cysteine 273. The segment at 53–172 (TGIPVELTMP…HFIGGRCKGQ (120 aa)) is fusion peptide. Asparagine 179 is a glycosylation site (N-linked (GlcNAc...) asparagine; by host). The tract at residues 259–313 (DLDKTVRDLPHIKDCDLSSSIITPGEHATDISLISDVERILDYALCQNTWSKIES) is trimerization. Asparagine 340 carries an N-linked (GlcNAc...) asparagine; by host glycan. The trimerization stretch occupies residues 387–409 (EIGPNGVLKTKQGYKFPLHIIGT). The helical transmembrane segment at 475-495 (VLAVIIGFVILMFLIKLIGVL) threads the bilayer. The Intravirion portion of the chain corresponds to 496–517 (SSLFRPKRRPIYKSDVEMAHFR).

Belongs to the vesiculovirus glycoprotein family. In terms of assembly, homotrimer. Interacts with host LDL at target cell surface. In terms of processing, glycosylated by host. Palmitoylated by host.

It is found in the virion membrane. The protein resides in the host membrane. Functionally, attaches the virus to host LDL receptors, inducing clathrin-dependent endocytosis of the virion. In the endosome, the acidic pH induces conformational changes in the glycoprotein trimer, which trigger fusion between virus and endosomal membrane. The sequence is that of Glycoprotein (G) from Aedes (Bovine).